The following is a 340-amino-acid chain: Major histocompatibility complex class I-related protein 1 (340 aa).

An N-terminal signal peptide occupies residues 1–22 (MGELTAFLLPLIIVLMVKHSNS). The segment at 23-109 (RTHSLRYFRL…KRLQRHYNHS (87 aa)) is alpha-1. The tract at residues 23 to 201 (RTHSLRYFRL…EYGKDTLQRT (179 aa)) is antigen-binding cleft. Topologically, residues 23 to 302 (RTHSLRYFRL…QESEAIPLVM (280 aa)) are extracellular. 8-(9H-purin-6-yl)-2-oxa-8-azabicyclo[3.3.1]nona-3,6-diene-4,6-dicarbaldehyde is bound by residues Tyr-29 and Arg-31. 5-(2-oxoethylideneamino)-6-(D-ribitylamino)uracil contacts are provided by Arg-31, Ser-46, and Lys-65. The 5-(2-oxopropylideneamino)-6-(D-ribitylamino)uracil site is built by Arg-31, Ser-46, and Lys-65. Arg-31, Ser-46, and Lys-65 together coordinate 7-hydroxy-6-methyl-8-(1-D-ribityl)lumazine. Positions 65 and 80 each coordinate 8-(9H-purin-6-yl)-2-oxa-8-azabicyclo[3.3.1]nona-3,6-diene-4,6-dicarbaldehyde. Residue Lys-65 participates in 2-amino-4-oxopteridine-6-carbaldehyde binding. A pyridoxal-binding site is contributed by Lys-65. N-linked (GlcNAc...) asparagine glycosylation occurs at Asn-107. Residues 110–201 (GSHTYQRMIG…EYGKDTLQRT (92 aa)) are alpha-2. 8-(9H-purin-6-yl)-2-oxa-8-azabicyclo[3.3.1]nona-3,6-diene-4,6-dicarbaldehyde is bound at residue Arg-116. 3 residues coordinate 5-(2-oxoethylideneamino)-6-(D-ribitylamino)uracil: Arg-116, Tyr-174, and Gln-175. Residues Arg-116, Tyr-174, and Gln-175 each coordinate 5-(2-oxopropylideneamino)-6-(D-ribitylamino)uracil. Residues Arg-116, Tyr-174, and Gln-175 each contribute to the 7-hydroxy-6-methyl-8-(1-D-ribityl)lumazine site. Cystine bridges form between Cys-120–Cys-183 and Cys-222–Cys-278. The tract at residues 202–293 (EPPLVRVNRK…GVHVVLQVPQ (92 aa)) is alpha-3. An Ig-like C1-type domain is found at 203-282 (PPLVRVNRKE…SNLYSCHVEH (80 aa)). The segment at 294 to 302 (ESEAIPLVM) is connecting peptide. The chain crosses the membrane as a helical span at residues 303–323 (KAVSGSIVFVIVLAGVGVLVW). Over 324–340 (RRRPREQNGAVYLPTPD) the chain is Cytoplasmic.

The protein belongs to the MHC class I family. As to quaternary structure, heterotrimer that consists of MR1, B2M and metabolite antigen. Major classes of metabolite ligands presented by MR1 include riboflavin-related antigens, pyrimidines and ribityl lumazines, nucleobase adducts and folate derivatives. Forms reversible covalent Schiff base complexes with microbial pyrimidine-based metabolite, which serves as a molecular switch triggering complete folding, stable association with B2M and translocation of the ternary complex from endoplasmic reticulum to the plasma membrane. Alternatively, forms non-Schiff base complexes with ribityl lumazines. On antigen-presenting cells, the ternary complex interacts with TCR on MR1-restricted T cells. Interacts with TAPBP and TAPBPL chaperones in the endoplasmic reticulum. TAPBP associated or not with MHC class I peptide loading complex binds ligand-free MR1 or MR1-B2M complex, providing for stable MR1 pools ready for metabolite antigen processing. TAPBPL interacts with MR1 in a ligand-independent way; this interaction may stabilize MR1 pool and facilitate ligand loading and dissociation. Structurally, MR1-B2M heterodimer adopts a topology similar to classical MHC class I molecules, with alpha-1 and alpha-2 domains of MR1 forming the antigen-binding cleft composed of two alpha-helices resting on a floor of 7-stranded anti-parallel beta-pleated sheet. MR1-B2M heterodimer (via alpha-helices) interacts with TCR (via CDR domains). In terms of processing, N-glycosylated.

The protein resides in the cell membrane. The protein localises to the endoplasmic reticulum membrane. It localises to the golgi apparatus membrane. It is found in the early endosome membrane. Its subcellular location is the late endosome membrane. Its function is as follows. Antigen-presenting molecule specialized in displaying microbial pyrimidine-based metabolites to alpha-beta T cell receptors (TCR) on innate-type mucosal-associated invariant T (MAIT) cells. In complex with B2M preferentially presents riboflavin-derived metabolites to semi-invariant TCRs on MAIT cells, guiding immune surveillance of the microbial metabolome at mucosal epithelial barriers. Signature pyrimidine-based microbial antigens are generated via non-enzymatic condensation of metabolite intermediates of the riboflavin pathway with by-products arising from other metabolic pathways such as glycolysis. Typical potent antigenic metabolites are 5-(2-oxoethylideneamino)-6-D-ribitylaminouracil (5-OE-RU) and 5-(2-oxopropylideneamino)-6-D-ribitylaminouracil (5-OP-RU), products of condensation of 5-amino-6-D-ribityaminouracil (5-A-RU) with glyoxal or methylglyoxal by-products, respectively. May present microbial antigens to various MAIT cell subsets, providing for unique recognition of diverse microbes, including pathogens that do not synthesize riboflavin. Upon antigen recognition, elicits rapid innate-type MAIT cell activation to eliminate pathogenic microbes by directly killing infected cells. During T cell development, drives thymic selection and post-thymic terminal differentiation of MAIT cells in a process dependent on commensal microflora. Acts as an immune sensor of cancer cell metabolome. May present a tumor-specific or -associated metabolite essential for cancer cell survival to a pan-cancer TCR on a non-MAIT CD8-positive T cell clone, triggering T cell-mediated killing of a wide range of cancer cell types. May present tumor-enriched pyridoxal and pyridoxal 5'-phosphate antigens, enabling preferential recognition of cancer cells. Presents nucleobase carbonyl adducts generated during oxidative stress. Captures M3Ade, a nucleobase adduct composed of one adenine modified by a malondialdehyde trimer, for recognition by MR1-restricted T cell clones expressing a polyclonal TCR repertoire. In Pongo abelii (Sumatran orangutan), this protein is Major histocompatibility complex class I-related protein 1.